The following is a 124-amino-acid chain: UPF0102 protein Blon_1698/BLIJ_1758 (124 aa).

Belongs to the UPF0102 family.

The chain is UPF0102 protein Blon_1698/BLIJ_1758 from Bifidobacterium longum subsp. infantis (strain ATCC 15697 / DSM 20088 / JCM 1222 / NCTC 11817 / S12).